The chain runs to 208 residues: Proheparin-binding EGF-like growth factor (208 aa).

The signal sequence occupies residues 1–19 (MKLLPSVVLKLFLAAVLSA). The propeptide at 20–62 (LVTGESLERLRRGLAAGTSNPDPPTVSTDQLLPLGGGRDRKVR) is or 72, or 73, or 76, or 81. The Extracellular portion of the chain corresponds to 20–160 (LVTGESLERL…ENRLYTYDHT (141 aa)). The interval 33–56 (LAAGTSNPDPPTVSTDQLLPLGGG) is disordered. Positions 36–49 (GTSNPDPPTVSTDQ) are enriched in polar residues. Thr-37 carries O-linked (GalNAc...) threonine glycosylation. An O-linked (GalNAc...) serine glycan is attached at Ser-38. O-linked (GalNAc...) threonine glycans are attached at residues Thr-44, Thr-47, Thr-75, and Thr-85. The segment at 82-104 (ALATPNKEEHGKRKKKGKGLGKK) is disordered. Residues 93–102 (KRKKKGKGLG) are compositionally biased toward basic residues. An EGF-like domain is found at 104–144 (KRDPCLRKYKDFCIHGECKYVKELRAPSCICHPGYHGERCH). Intrachain disulfides connect Cys-108/Cys-121, Cys-116/Cys-132, and Cys-134/Cys-143. Positions 149–208 (PVENRLYTYDHTTILAVVAVVLSSVCLLVIVGLLMFRYHRRGGYDVENEEKVKLGMTNSH) are cleaved as a propeptide — C-terminal. The helical transmembrane segment at 161–184 (TILAVVAVVLSSVCLLVIVGLLMF) threads the bilayer. Topologically, residues 185–208 (RYHRRGGYDVENEEKVKLGMTNSH) are cytoplasmic.

Interacts with FBLN1. Interacts with EGFR and ERBB4. Several N-termini have been identified by direct sequencing. The forms with N-termini 63, 73 and 74 have been tested and found to be biologically active. Post-translationally, O-glycosylated with core 1 or possibly core 8 glycans. Thr-47 is a minor glycosylation site compared to Thr-44.

The protein localises to the secreted. It is found in the extracellular space. Its subcellular location is the cell membrane. In terms of biological role, growth factor that mediates its effects via EGFR, ERBB2 and ERBB4. Required for normal cardiac valve formation and normal heart function. Promotes smooth muscle cell proliferation. May be involved in macrophage-mediated cellular proliferation. It is mitogenic for fibroblasts, but not endothelial cells. It is able to bind EGF receptor/EGFR with higher affinity than EGF itself and is a far more potent mitogen for smooth muscle cells than EGF. Also acts as a diphtheria toxin receptor. The protein is Proheparin-binding EGF-like growth factor (HBEGF) of Homo sapiens (Human).